A 306-amino-acid chain; its full sequence is MKPTAEILASIIEEVRPLTGQGKVADYIPALAKVPSEKLGIAVFTNQGEVISAGDAQEGFSIQSISKVLSLTLAMGLYQPNELWSRVGKEPSGQAFNSLIQLEMEHGIPRNPFINAGAIVVCDMLQSRLSAPRQRLLEFVRQLSGEPLIAYDKVVAASEMMHSDRNAAIAYLMRSFGNFHNEVIPVLHNYFHACALKMSCVELAKTFSYLANKGVSVVTGETVITPTQSKQTNALLATCGLYDGAGEFAYRVGMPGKSGVGGGIIAVVPGEMTIAVWSPALDQSGNSLAGTRALELLAQRIGRSIF.

Positions 64, 115, 159, 166, 190, 242, and 260 each coordinate substrate.

Belongs to the glutaminase family. As to quaternary structure, homotetramer.

It carries out the reaction L-glutamine + H2O = L-glutamate + NH4(+). The polypeptide is Glutaminase (Vibrio cholerae serotype O1 (strain ATCC 39541 / Classical Ogawa 395 / O395)).